A 141-amino-acid polypeptide reads, in one-letter code: HTH-type transcriptional repressor NsrR (141 aa).

Positions 2–129 constitute an HTH rrf2-type domain; sequence QLTNFTDFGL…DKHTIQDMLT (128 aa). Positions 28–51 form a DNA-binding region, H-T-H motif; it reads ITVVTETFDVSRNHMVKIINKLGQ. Residues C91, C96, and C102 each coordinate [2Fe-2S] cluster.

The cofactor is [2Fe-2S] cluster.

Nitric oxide-sensitive repressor of genes involved in protecting the cell against nitrosative stress. May require iron for activity. This Aliivibrio fischeri (strain ATCC 700601 / ES114) (Vibrio fischeri) protein is HTH-type transcriptional repressor NsrR.